The primary structure comprises 419 residues: Synaptosomal-associated protein 47 (419 aa).

T-SNARE coiled-coil homology domains lie at 109 to 171 (AANP…LTEL) and 356 to 418 (KDWP…MRKL).

Belongs to the SVAP1 family. As to quaternary structure, associates with the BLOC-1 complex. Interacts with BLOC1S6. Forms a complex containing SNAP47, VAMP2 and STX1A.

It is found in the endomembrane system. Its subcellular location is the cytoplasm. It localises to the perinuclear region. In terms of biological role, may play a role in intracellular membrane fusion. In Rattus norvegicus (Rat), this protein is Synaptosomal-associated protein 47 (Snap47).